A 251-amino-acid chain; its full sequence is CDP-diacylglycerol pyrophosphatase (251 aa).

The helical transmembrane segment at 4–24 (AGLLFLVMIVIAVVATGIGYW) threads the bilayer.

This sequence belongs to the Cdh family.

The protein localises to the cell inner membrane. It catalyses the reaction a CDP-1,2-diacyl-sn-glycerol + H2O = a 1,2-diacyl-sn-glycero-3-phosphate + CMP + 2 H(+). It participates in phospholipid metabolism; CDP-diacylglycerol degradation; phosphatidate from CDP-diacylglycerol: step 1/1. The sequence is that of CDP-diacylglycerol pyrophosphatase from Escherichia coli O45:K1 (strain S88 / ExPEC).